The following is a 1281-amino-acid chain: Zinc finger transcription factor Trps1 (1281 aa).

2 disordered regions span residues 1–101 and 116–204; these read MVRK…VSFP and PAAG…KGDL. 2 stretches are compositionally biased toward polar residues: residues 21–31 and 40–49; these read LEPTATESKVS and DQMSENTDQS. Residue Lys-29 forms a Glycyl lysine isopeptide (Lys-Gly) (interchain with G-Cter in SUMO2) linkage. Residues Ser-90 and Ser-127 each carry the phosphoserine modification. Over residues 148–162 the composition is skewed to basic and acidic residues; that stretch reads LETKEEHKMSPKATE. Polar residues predominate over residues 166-189; sequence PVQSGQANCQGLSPVSVASKNPQV. A phosphoserine mark is found at Ser-178 and Ser-216. Residues 222-247 form a C2H2-type 1; atypical zinc finger; the sequence is FKCNICGYGYYGNDPTDLIKHFRKYH. Residue Lys-263 forms a Glycyl lysine isopeptide (Lys-Gly) (interchain with G-Cter in SUMO2) linkage. Residues 333–358 form a C2H2-type 2; atypical zinc finger; that stretch reads FRCKFCNFTYMGNSSTELEQHFLQTH. Residues 365–393 are disordered; that stretch reads SLPSSEGVKPSEKNSNKSIPALRASDSGD. Residues Lys-418, Lys-457, Lys-474, and Lys-488 each participate in a glycyl lysine isopeptide (Lys-Gly) (interchain with G-Cter in SUMO2) cross-link. The interval 484–515 is disordered; sequence NDLAKSVEGEPLTKPEKGLSGAKKKDFPSKGA. The segment covering 488 to 515 has biased composition (basic and acidic residues); it reads KSVEGEPLTKPEKGLSGAKKKDFPSKGA. The C2H2-type 3; atypical zinc-finger motif lies at 614 to 637; sequence HQCHQCSFSTPDVDVLLFHYETVH. Positions 635-819 are mediates interaction with GLI3; the sequence is TVHESQASDV…SLGLLTPVSS (185 aa). Lys-645 is covalently cross-linked (Glycyl lysine isopeptide (Lys-Gly) (interchain with G-Cter in SUMO2)). 2 consecutive C2H2-type zinc fingers follow at residues 666–689 and 692–715; these read HSCT…RRAH and YKCR…NTVH. Residues Lys-737 and Lys-755 each participate in a glycyl lysine isopeptide (Lys-Gly) (interchain with G-Cter in SUMO2) cross-link. Lys-766 participates in a covalent cross-link: Glycyl lysine isopeptide (Lys-Gly) (interchain with G-Cter in SUMO1); alternate. Residue Lys-766 forms a Glycyl lysine isopeptide (Lys-Gly) (interchain with G-Cter in SUMO2); alternate linkage. Residues Lys-825 and Lys-850 each participate in a glycyl lysine isopeptide (Lys-Gly) (interchain with G-Cter in SUMO2) cross-link. A disordered region spans residues 856–885; that stretch reads APAGSEKSASLTQQYPASGESKTKDESQSL. Residues 862–871 show a composition bias toward polar residues; the sequence is KSASLTQQYP. Glycyl lysine isopeptide (Lys-Gly) (interchain with G-Cter in SUMO2) cross-links involve residues Lys-877 and Lys-879. The GATA-type zinc finger occupies 896-920; sequence CANCLTTKTSLWRKNANGGYVCNAC. Residues Lys-925, Lys-937, and Lys-965 each participate in a glycyl lysine isopeptide (Lys-Gly) (interchain with G-Cter in SUMO2) cross-link. The span at 961–977 shows a compositional bias: polar residues; sequence EQLNKQQRGSGEEQVNG. The segment at 961 to 1000 is disordered; that stretch reads EQLNKQQRGSGEEQVNGSPLERRSEDHLSESHPREIPLPS. The residue at position 978 (Ser-978) is a Phosphoserine. Residues 980 to 995 are compositionally biased toward basic and acidic residues; that stretch reads LERRSEDHLSESHPRE. A mediates interaction with RNF4 region spans residues 985–1184; the sequence is EDHLSESHPR…PTANGASKEK (200 aa). Residues Lys-1003, Lys-1012, Lys-1030, and Lys-1040 each participate in a glycyl lysine isopeptide (Lys-Gly) (interchain with G-Cter in SUMO2) cross-link. Residues 1040–1049 show a composition bias toward polar residues; that stretch reads KSPQESTGDP. Residues 1040–1078 are disordered; it reads KSPQESTGDPGNSSSVSDGKGSSERGSPIEKYMRPAKHP. Ser-1041 is modified (phosphoserine). Low complexity predominate over residues 1050–1059; sequence GNSSSVSDGK. The span at 1060–1072 shows a compositional bias: basic and acidic residues; the sequence is GSSERGSPIEKYM. At Ser-1066 the chain carries Phosphoserine. Residue Lys-1070 forms a Glycyl lysine isopeptide (Lys-Gly) (interchain with G-Cter in SUMO2) linkage. Position 1085 is a phosphoserine (Ser-1085). Residues 1163–1281 form a transcriptional repressor domain region; that stretch reads PLDLAIKHSR…QAEKNGKPKE (119 aa). Residues 1169–1195 are disordered; sequence KHSRPGPTANGASKEKTKAPPTVKNED. Residues Lys-1192 and Lys-1201 each participate in a glycyl lysine isopeptide (Lys-Gly) (interchain with G-Cter in SUMO2); alternate cross-link. Residues Lys-1192 and Lys-1201 each participate in a glycyl lysine isopeptide (Lys-Gly) (interchain with G-Cter in SUMO); alternate cross-link. Lys-1201 participates in a covalent cross-link: Glycyl lysine isopeptide (Lys-Gly) (interchain with G-Cter in SUMO1); alternate. 2 consecutive C2H2-type zinc fingers follow at residues 1215 to 1237 and 1243 to 1267; these read TKCV…MSCH and FQCS…RGLH.

In terms of assembly, interacts with RNF4; regulates TRPS1 repressor activity. Interacts specifically with the activator form of GLI3 (GLI3A) but not with the repressor form (GLI3R). In terms of processing, sumoylated. Sumoylation in the repressor domain inhibits the transcription repression activity. Sumoylation on Lys-1201 is the major site. Appears to be sumoylated on multiple sites. In the embryo, expression is detected in both visceral and skeletal tissues. Found in the maxilla, mandible, snout, prospective phalanges and in the femoral head within the developing hip. Also expressed in the hair follicles.

It localises to the nucleus. In terms of biological role, transcriptional repressor. Binds specifically to GATA sequences and represses expression of GATA-regulated genes at selected sites and stages in vertebrate development. Regulates chondrocyte proliferation and differentiation. Executes multiple functions in proliferating chondrocytes, expanding the region of distal chondrocytes, activating proliferation in columnar cells and supporting the differentiation of columnar into hypertrophic chondrocytes. The chain is Zinc finger transcription factor Trps1 (Trps1) from Mus musculus (Mouse).